Consider the following 240-residue polypeptide: UDP-2,3-diacylglucosamine hydrolase (240 aa).

Residues Asp-8, His-10, Asp-41, Asn-79, and His-114 each contribute to the Mn(2+) site. 79 to 80 (NR) contributes to the substrate binding site. 5 residues coordinate substrate: Asp-122, Ser-160, Asn-164, Lys-167, and His-195. Residues His-195 and His-197 each coordinate Mn(2+).

This sequence belongs to the LpxH family. It depends on Mn(2+) as a cofactor.

It localises to the cell inner membrane. It catalyses the reaction UDP-2-N,3-O-bis[(3R)-3-hydroxytetradecanoyl]-alpha-D-glucosamine + H2O = 2-N,3-O-bis[(3R)-3-hydroxytetradecanoyl]-alpha-D-glucosaminyl 1-phosphate + UMP + 2 H(+). It participates in glycolipid biosynthesis; lipid IV(A) biosynthesis; lipid IV(A) from (3R)-3-hydroxytetradecanoyl-[acyl-carrier-protein] and UDP-N-acetyl-alpha-D-glucosamine: step 4/6. Hydrolyzes the pyrophosphate bond of UDP-2,3-diacylglucosamine to yield 2,3-diacylglucosamine 1-phosphate (lipid X) and UMP by catalyzing the attack of water at the alpha-P atom. Involved in the biosynthesis of lipid A, a phosphorylated glycolipid that anchors the lipopolysaccharide to the outer membrane of the cell. The chain is UDP-2,3-diacylglucosamine hydrolase from Yersinia enterocolitica serotype O:8 / biotype 1B (strain NCTC 13174 / 8081).